Reading from the N-terminus, the 473-residue chain is Xylan O-acetyltransferase 14 (473 aa).

The segment covering M1–T17 has biased composition (polar residues). Residues M1–G22 form a disordered region. Over M1–H54 the chain is Cytoplasmic. A helical; Signal-anchor for type II membrane protein transmembrane segment spans residues F55 to T75. A disordered region spans residues K76–S101. Over K76–S473 the chain is Lumenal. Cystine bridges form between C108–C159, C130–C195, C139–C455, and C370–C451. The GDS motif signature appears at G182–S184. The active-site Nucleophile is S184. Residues N209, N223, and N414 are each glycosylated (N-linked (GlcNAc...) asparagine). D450 functions as the Proton donor in the catalytic mechanism. Positions D450–H453 match the DXXH motif motif. The active-site Proton acceptor is the H453.

The protein belongs to the PC-esterase family. TBL subfamily.

The protein localises to the golgi apparatus membrane. Its function is as follows. Xylan acetyltransferase required for 2-O- and 3-O-monoacetylation of xylosyl residues in xylan. Catalyzes the 2-O-acetylation of xylan, followed by nonenzymatic acetyl migration to the O-3 position, resulting in products that are monoacetylated at both O-2 and O-3 positions. This is Xylan O-acetyltransferase 14 from Oryza sativa subsp. japonica (Rice).